The chain runs to 245 residues: Protein-glutamine gamma-glutamyltransferase (245 aa).

Belongs to the bacillus TGase family.

The catalysed reaction is L-glutaminyl-[protein] + L-lysyl-[protein] = [protein]-L-lysyl-N(6)-5-L-glutamyl-[protein] + NH4(+). Functionally, probably plays a role in the assembly of the spore coat proteins by catalyzing epsilon-(gamma-glutamyl)lysine cross-links. In wild-type spores at 37 degrees Celsius, tgl mediates the cross-linking of GerQ in higher molecular mass forms, probably in cooperation with YabG. In Bacillus subtilis (strain 168), this protein is Protein-glutamine gamma-glutamyltransferase (tgl).